A 192-amino-acid chain; its full sequence is Thiamine transporter ThiT (192 aa).

The next 6 helical transmembrane spans lie at 10–30 (LIEI…SGMF), 31–51 (LSMP…LISF), 57–77 (AGLT…NLFA), 81–101 (VQLL…GCFA), 123–143 (AVFI…AVFF), and 164–184 (YMVP…MTAP).

The protein belongs to the vitamin uptake transporter (VUT/ECF) (TC 2.A.88) family. Thiamine transporter subfamily. As to quaternary structure, forms a stable energy-coupling factor (ECF) transporter complex composed of a membrane-embedded substrate-binding protein (S component), two ATP-binding proteins (A components) and a transmembrane protein (T component).

It is found in the cell membrane. Functionally, probably a thiamine-binding protein that interacts with the energy-coupling factor (ECF) ABC-transporter complex. Unlike classic ABC transporters this ECF transporter provides the energy necessary to transport a number of different substrates. The substrates themselves are bound by transmembrane, not extracytoplasmic soluble proteins. The chain is Thiamine transporter ThiT (thiT) from Bacillus subtilis (strain 168).